The primary structure comprises 168 residues: WAP four-disulfide core domain protein 2 (168 aa).

An N-terminal signal peptide occupies residues 1–30 (MPACRLCLLATGLLLGLLLFTPLSATGTRA). WAP domains follow at residues 31 to 74 (EKPG…SKPN) and 119 to 167 (NGEK…TTPK). Disulfide bonds link cysteine 36-cysteine 62, cysteine 45-cysteine 66, cysteine 49-cysteine 61, and cysteine 55-cysteine 70. The interval 100-123 (PLSRGQVSTKPPVVTKEGGNGEKQ) is disordered. Intrachain disulfides connect cysteine 126/cysteine 154, cysteine 137/cysteine 158, cysteine 141/cysteine 153, and cysteine 147/cysteine 163.

Homotrimer; disulfide-linked.

It localises to the secreted. Its function is as follows. Broad range protease inhibitor. The sequence is that of WAP four-disulfide core domain protein 2 (Wfdc2) from Rattus norvegicus (Rat).